A 382-amino-acid chain; its full sequence is tRNA-specific 2-thiouridylase MnmA (382 aa).

Residues alanine 18–serine 25 and leucine 44 each bind ATP. Cysteine 112 acts as the Nucleophile in catalysis. A disulfide bridge connects residues cysteine 112 and cysteine 209. Glycine 136 is an ATP binding site. Residues arginine 159–glutamine 161 are interaction with tRNA. The active-site Cysteine persulfide intermediate is the cysteine 209.

The protein belongs to the MnmA/TRMU family.

The protein resides in the cytoplasm. It carries out the reaction S-sulfanyl-L-cysteinyl-[protein] + uridine(34) in tRNA + AH2 + ATP = 2-thiouridine(34) in tRNA + L-cysteinyl-[protein] + A + AMP + diphosphate + H(+). Catalyzes the 2-thiolation of uridine at the wobble position (U34) of tRNA, leading to the formation of s(2)U34. This is tRNA-specific 2-thiouridylase MnmA from Methylobacterium nodulans (strain LMG 21967 / CNCM I-2342 / ORS 2060).